A 560-amino-acid chain; its full sequence is Probable pectinesterase/pectinesterase inhibitor 20 (560 aa).

The signal sequence occupies residues 1-24 (MSQKLMFLFTLACLSSLPSPFISA). Positions 25-179 (QIPAIGNATS…TKLYGVSLAL (155 aa)) are pectinesterase inhibitor 20. Residues asparagine 31, asparagine 168, asparagine 251, asparagine 255, asparagine 268, asparagine 307, and asparagine 314 are each glycosylated (N-linked (GlcNAc...) asparagine). The pectinesterase 20 stretch occupies residues 246–544 (VTVIQNGTGN…FTVTNFLVGE (299 aa)). A substrate-binding site is contributed by threonine 323. Asparagine 340 is a glycosylation site (N-linked (GlcNAc...) asparagine). Glutamine 353 is a binding site for substrate. Aspartate 376 (proton donor; for pectinesterase activity) is an active-site residue. A disulfide bridge connects residues cysteine 390 and cysteine 410. The Nucleophile; for pectinesterase activity role is filled by aspartate 397. The tract at residues 417–441 (PRKGQSNEVTAQGRTDPNQNTGTAI) is disordered. Positions 419–439 (KGQSNEVTAQGRTDPNQNTGT) are enriched in polar residues. N-linked (GlcNAc...) asparagine glycosylation occurs at asparagine 456. Residues arginine 465 and tryptophan 467 each contribute to the substrate site. 3 N-linked (GlcNAc...) asparagine glycosylation sites follow: asparagine 507, asparagine 528, and asparagine 534.

This sequence in the N-terminal section; belongs to the PMEI family. In the C-terminal section; belongs to the pectinesterase family. Expressed in flower buds.

It localises to the secreted. It is found in the cell wall. It catalyses the reaction [(1-&gt;4)-alpha-D-galacturonosyl methyl ester](n) + n H2O = [(1-&gt;4)-alpha-D-galacturonosyl](n) + n methanol + n H(+). It participates in glycan metabolism; pectin degradation; 2-dehydro-3-deoxy-D-gluconate from pectin: step 1/5. Functionally, acts in the modification of cell walls via demethylesterification of cell wall pectin. In Arabidopsis thaliana (Mouse-ear cress), this protein is Probable pectinesterase/pectinesterase inhibitor 20 (PME20).